The chain runs to 193 residues: Peptidyl-tRNA hydrolase (193 aa).

Histidine 17 lines the tRNA pocket. Histidine 22 acts as the Proton acceptor in catalysis. TRNA contacts are provided by phenylalanine 68, asparagine 70, and asparagine 116.

Belongs to the PTH family. In terms of assembly, monomer.

The protein resides in the cytoplasm. It carries out the reaction an N-acyl-L-alpha-aminoacyl-tRNA + H2O = an N-acyl-L-amino acid + a tRNA + H(+). Its function is as follows. Hydrolyzes ribosome-free peptidyl-tRNAs (with 1 or more amino acids incorporated), which drop off the ribosome during protein synthesis, or as a result of ribosome stalling. Functionally, catalyzes the release of premature peptidyl moieties from peptidyl-tRNA molecules trapped in stalled 50S ribosomal subunits, and thus maintains levels of free tRNAs and 50S ribosomes. This chain is Peptidyl-tRNA hydrolase, found in Xanthomonas campestris pv. campestris (strain 8004).